The primary structure comprises 388 residues: Ferrochelatase (388 aa).

The Fe cation site is built by His-196 and Glu-277.

It belongs to the ferrochelatase family.

The protein resides in the cytoplasm. It catalyses the reaction heme b + 2 H(+) = protoporphyrin IX + Fe(2+). It participates in porphyrin-containing compound metabolism; protoheme biosynthesis; protoheme from protoporphyrin-IX: step 1/1. Functionally, catalyzes the ferrous insertion into protoporphyrin IX. The chain is Ferrochelatase from Nostoc sp. (strain PCC 7120 / SAG 25.82 / UTEX 2576).